The following is a 281-amino-acid chain: Thioesterase PikA5 (281 aa).

Residues 26 to 249 (RLVCLPHAGG…WHEICNDISD (224 aa)) are thioesterase. Ser99 (nucleophile; for thioesterase activity) is an active-site residue. The Proton acceptor; for thioesterase activity role is filled by His233.

This sequence belongs to the thioesterase family.

Its pathway is antibiotic biosynthesis. Involved in the biosynthesis of 12- and 14-membered ring macrolactone antibiotics such as methymycin, neomethymycin, narbomycin and pikromycin. Responsible for removing mis-formed acyl moieties (aberrant decarboxylation) that are bound to the PKS and could block it. Catalyzes the cleavage of methylmalonyl-[acp]. It exhibits some acyl-group specificity, and catalyzes the cleavage of propionyl and butyryl derivatives faster than acetyl malonyl or methylmalonyl derivatives. In Streptomyces venezuelae, this protein is Thioesterase PikA5.